A 128-amino-acid polypeptide reads, in one-letter code: Sulfurtransferase TusD (128 aa).

The active-site Cysteine persulfide intermediate is the cysteine 78.

The protein belongs to the DsrE/TusD family. As to quaternary structure, heterohexamer, formed by a dimer of trimers. The hexameric TusBCD complex contains 2 copies each of TusB, TusC and TusD. The TusBCD complex interacts with TusE.

Its subcellular location is the cytoplasm. Part of a sulfur-relay system required for 2-thiolation of 5-methylaminomethyl-2-thiouridine (mnm(5)s(2)U) at tRNA wobble positions. Accepts sulfur from TusA and transfers it in turn to TusE. In Buchnera aphidicola subsp. Schizaphis graminum (strain Sg), this protein is Sulfurtransferase TusD.